A 788-amino-acid chain; its full sequence is Auxin response factor 4 (788 aa).

Residues 1–19 (MEFDLNTEIAEVEEEENDD) show a composition bias toward acidic residues. The disordered stretch occupies residues 1-53 (MEFDLNTEIAEVEEEENDDVGVGVGGGTRIDKGRLGISPSSSSSCSSGSSSSS). Residues 38–53 (SPSSSSSCSSGSSSSS) are compositionally biased toward low complexity. Residues 177–279 (FCKTLTASDT…ELRLGIRRAA (103 aa)) constitute a DNA-binding region (TF-B3). The interval 413–433 (LSIQSSPRPKRPWAGLLDTTP) is disordered. The PB1 domain maps to 665 to 747 (RICTKVHKQG…VVWKIHLYTK (83 aa)).

It belongs to the ARF family. Homodimers and heterodimers. In terms of tissue distribution, expressed in the whole plant.

The protein localises to the nucleus. Its function is as follows. Auxin response factors (ARFs) are transcriptional factors that bind specifically to the DNA sequence 5'-TGTCTC-3' found in the auxin-responsive promoter elements (AuxREs). Could act as transcriptional activator or repressor. Formation of heterodimers with Aux/IAA proteins may alter their ability to modulate early auxin response genes expression. This Arabidopsis thaliana (Mouse-ear cress) protein is Auxin response factor 4 (ARF4).